Reading from the N-terminus, the 174-residue chain is Secreted cysteine-rich protein UMAG_00792 (174 aa).

The signal sequence occupies residues 1–26; it reads MVSFKSSSLFLHSLSALLVLTTLSSA. N-linked (GlcNAc...) asparagine glycosylation is present at Asn-77.

As to quaternary structure, secreted cysteine-rich proteins (SCRPs) are predicted to form amyloids.

It localises to the secreted. Its function is as follows. Secreted cysteine-rich protein that might form amyloid strutures which are involved in attachment to hydrophobic surfaces and in formation of hydrophobic aerial hyphae. This Mycosarcoma maydis (Corn smut fungus) protein is Secreted cysteine-rich protein UMAG_00792.